We begin with the raw amino-acid sequence, 397 residues long: ATP-dependent RNA helicase RhlB (397 aa).

The short motif at threonine 9–alanine 37 is the Q motif element. Positions leucine 40–valine 220 constitute a Helicase ATP-binding domain. Position 53-60 (alanine 53–threonine 60) interacts with ATP. The short motif at aspartate 166–aspartate 169 is the DEAD box element. Residues aspartate 243–valine 393 form the Helicase C-terminal domain.

It belongs to the DEAD box helicase family. RhlB subfamily. As to quaternary structure, component of the RNA degradosome, which is a multiprotein complex involved in RNA processing and mRNA degradation.

The protein resides in the cytoplasm. It carries out the reaction ATP + H2O = ADP + phosphate + H(+). In terms of biological role, DEAD-box RNA helicase involved in RNA degradation. Has RNA-dependent ATPase activity and unwinds double-stranded RNA. In Pseudomonas aeruginosa (strain UCBPP-PA14), this protein is ATP-dependent RNA helicase RhlB.